Here is a 448-residue protein sequence, read N- to C-terminus: Ribosomal protein uS12 methylthiotransferase RimO (448 aa).

In terms of domain architecture, MTTase N-terminal spans 7–119 (QSLHLISLGC…IDSMIAQRRS (113 aa)). Positions 16, 50, 82, 151, 155, and 158 each coordinate [4Fe-4S] cluster. Residues 137 to 366 (IGSSFHAYIK…NKIIQSQYKA (230 aa)) enclose the Radical SAM core domain.

The protein belongs to the methylthiotransferase family. RimO subfamily. Requires [4Fe-4S] cluster as cofactor.

It localises to the cytoplasm. It carries out the reaction L-aspartate(89)-[ribosomal protein uS12]-hydrogen + (sulfur carrier)-SH + AH2 + 2 S-adenosyl-L-methionine = 3-methylsulfanyl-L-aspartate(89)-[ribosomal protein uS12]-hydrogen + (sulfur carrier)-H + 5'-deoxyadenosine + L-methionine + A + S-adenosyl-L-homocysteine + 2 H(+). Its function is as follows. Catalyzes the methylthiolation of an aspartic acid residue of ribosomal protein uS12. This chain is Ribosomal protein uS12 methylthiotransferase RimO, found in Helicobacter hepaticus (strain ATCC 51449 / 3B1).